The chain runs to 292 residues: Putative ribonuclease 3 (292 aa).

The RNase III domain maps to 32–158 (LGMSDEYIPY…FFGATEWLID (127 aa)). One can recognise a DRBM domain in the interval 204-276 (DAKTRFNEVI…ASRALETLAL (73 aa)).

It belongs to the IIV-6 142R family.

It catalyses the reaction Endonucleolytic cleavage to 5'-phosphomonoester.. In terms of biological role, digests double-stranded RNA. The chain is Putative ribonuclease 3 from Acheta domesticus (House cricket).